Here is an 859-residue protein sequence, read N- to C-terminus: DNA mismatch repair protein MutS (859 aa).

Residue Gly622 to Ser629 participates in ATP binding.

Belongs to the DNA mismatch repair MutS family.

This protein is involved in the repair of mismatches in DNA. It is possible that it carries out the mismatch recognition step. This protein has a weak ATPase activity. The chain is DNA mismatch repair protein MutS from Coxiella burnetii (strain RSA 493 / Nine Mile phase I).